Reading from the N-terminus, the 165-residue chain is Regulator of sigma D (165 aa).

Belongs to the Rsd/AlgQ family. Interacts with RpoD.

It localises to the cytoplasm. Binds RpoD and negatively regulates RpoD-mediated transcription activation by preventing the interaction between the primary sigma factor RpoD with the catalytic core of the RNA polymerase and with promoter DNA. May be involved in replacement of the RNA polymerase sigma subunit from RpoD to RpoS during the transition from exponential growth to the stationary phase. In Enterobacter sp. (strain 638), this protein is Regulator of sigma D.